The following is a 647-amino-acid chain: DNA ligase (647 aa).

NAD(+)-binding positions include 30-34 (DEEYD), 79-80 (SM), and Glu105. The active-site N6-AMP-lysine intermediate is the Lys107. NAD(+) contacts are provided by Arg128, Glu162, and Lys301. Positions 395, 398, 411, and 416 each coordinate Zn(2+). Residues 570–647 (KSDGVIFGKT…ESAFNELVKE (78 aa)) form the BRCT domain.

This sequence belongs to the NAD-dependent DNA ligase family. LigA subfamily. Mg(2+) is required as a cofactor. Requires Mn(2+) as cofactor.

The catalysed reaction is NAD(+) + (deoxyribonucleotide)n-3'-hydroxyl + 5'-phospho-(deoxyribonucleotide)m = (deoxyribonucleotide)n+m + AMP + beta-nicotinamide D-nucleotide.. DNA ligase that catalyzes the formation of phosphodiester linkages between 5'-phosphoryl and 3'-hydroxyl groups in double-stranded DNA using NAD as a coenzyme and as the energy source for the reaction. It is essential for DNA replication and repair of damaged DNA. This is DNA ligase from Campylobacter jejuni subsp. jejuni serotype O:2 (strain ATCC 700819 / NCTC 11168).